The primary structure comprises 320 residues: UV DNA damage endonuclease (320 aa).

It belongs to the uve1/UvsE family.

In terms of biological role, component in a DNA repair pathway. Removal of UV LIGHT damaged nucleotides. Recognizes pyrimidine dimers and cleave a phosphodiester bond immediately 5' to the lesion. In Bacillus pumilus (strain SAFR-032), this protein is UV DNA damage endonuclease.